Here is a 418-residue protein sequence, read N- to C-terminus: UDP-N-acetylglucosamine 1-carboxyvinyltransferase (418 aa).

22–23 (KN) is a phosphoenolpyruvate binding site. Residue arginine 92 coordinates UDP-N-acetyl-alpha-D-glucosamine. Cysteine 116 acts as the Proton donor in catalysis. 2-(S-cysteinyl)pyruvic acid O-phosphothioketal is present on cysteine 116. UDP-N-acetyl-alpha-D-glucosamine-binding positions include 121-125 (RPIDL), aspartate 305, and leucine 327.

Belongs to the EPSP synthase family. MurA subfamily.

The protein resides in the cytoplasm. The catalysed reaction is phosphoenolpyruvate + UDP-N-acetyl-alpha-D-glucosamine = UDP-N-acetyl-3-O-(1-carboxyvinyl)-alpha-D-glucosamine + phosphate. The protein operates within cell wall biogenesis; peptidoglycan biosynthesis. Its function is as follows. Cell wall formation. Adds enolpyruvyl to UDP-N-acetylglucosamine. This chain is UDP-N-acetylglucosamine 1-carboxyvinyltransferase, found in Campylobacter jejuni subsp. jejuni serotype O:23/36 (strain 81-176).